We begin with the raw amino-acid sequence, 131 residues long: Small ribosomal subunit protein uS8 (131 aa).

The protein belongs to the universal ribosomal protein uS8 family. In terms of assembly, part of the 30S ribosomal subunit. Contacts proteins S5 and S12.

In terms of biological role, one of the primary rRNA binding proteins, it binds directly to 16S rRNA central domain where it helps coordinate assembly of the platform of the 30S subunit. The protein is Small ribosomal subunit protein uS8 of Albidiferax ferrireducens (strain ATCC BAA-621 / DSM 15236 / T118) (Rhodoferax ferrireducens).